A 261-amino-acid polypeptide reads, in one-letter code: Kallikrein 1-related peptidase b11 (261 aa).

Positions methionine 1–alanine 18 are cleaved as a signal peptide. Residues proline 19–arginine 24 constitute a propeptide, activation peptide. Positions isoleucine 25 to alanine 258 constitute a Peptidase S1 domain. 5 cysteine pairs are disulfide-bonded: cysteine 31–cysteine 173, cysteine 50–cysteine 66, cysteine 152–cysteine 219, cysteine 184–cysteine 198, and cysteine 209–cysteine 234. The active-site Charge relay system is histidine 65. The N-linked (GlcNAc...) asparagine glycan is linked to asparagine 102. The Charge relay system role is filled by aspartate 120. Serine 213 (charge relay system) is an active-site residue.

It belongs to the peptidase S1 family. Kallikrein subfamily.

The catalysed reaction is Preferential cleavage of Arg-|-Xaa bonds in small molecule substrates. Highly selective action to release kallidin (lysyl-bradykinin) from kininogen involves hydrolysis of Met-|-Xaa or Leu-|-Xaa.. In terms of biological role, glandular kallikreins cleave Met-Lys and Arg-Ser bonds in kininogen to release Lys-bradykinin. The polypeptide is Kallikrein 1-related peptidase b11 (Klk1b11) (Mus musculus (Mouse)).